The primary structure comprises 384 residues: Dual specificity protein phosphatase 5 (384 aa).

One can recognise a Rhodanese domain in the interval Ala-19–Val-141. The Nuclear localization signal motif lies at Arg-53 to Arg-74. The 142-residue stretch at Gly-178–Pro-319 folds into the Tyrosine-protein phosphatase domain. Cys-263 functions as the Phosphocysteine intermediate in the catalytic mechanism.

This sequence belongs to the protein-tyrosine phosphatase family. Non-receptor class dual specificity subfamily.

The protein localises to the nucleus. The enzyme catalyses O-phospho-L-tyrosyl-[protein] + H2O = L-tyrosyl-[protein] + phosphate. It carries out the reaction O-phospho-L-seryl-[protein] + H2O = L-seryl-[protein] + phosphate. The catalysed reaction is O-phospho-L-threonyl-[protein] + H2O = L-threonyl-[protein] + phosphate. Its function is as follows. Dual specificity protein phosphatase; active with phosphotyrosine, phosphoserine and phosphothreonine residues. The highest relative activity is toward ERK1. The sequence is that of Dual specificity protein phosphatase 5 (DUSP5) from Homo sapiens (Human).